A 541-amino-acid chain; its full sequence is Protein wntless homolog A (541 aa).

The first 28 residues, 1 to 28 (MAGAIIENMSTKKLCMVGVALLLLQVLA), serve as a signal peptide directing secretion. At 29–232 (FLVGGLIAPK…SIFQNGGFTM (204 aa)) the chain is on the lumenal side. The helical transmembrane segment at 233-253 (VWFAMKTFLTPSIIIIMIWYW) threads the bilayer. The Cytoplasmic portion of the chain corresponds to 254 to 268 (RRITMMTRSPVLLEK). Residues 269-289 (VIFALGFSMTFINIPVEWFSI) form a helical membrane-spanning segment. The Lumenal segment spans residues 290–303 (GYDWTWMLLFGDIR). The helical transmembrane segment at 304 to 324 (QGIFYAMLLSFWIIFCGEHMM) threads the bilayer. Residues 325–331 (DQTERNR) lie on the Cytoplasmic side of the membrane. A helical membrane pass occupies residues 332–352 (ISVYWKQVGPIAFGSCCLFIF). The Lumenal portion of the chain corresponds to 353-379 (DMCERGVQLKNPFYSIWTTDVGAEIAM). Residues 380–400 (AFIIVAGICACLYFLFLCFMV) form a helical membrane-spanning segment. The Cytoplasmic portion of the chain corresponds to 401–431 (YQVFRNISGKQSNLPAMTKARRLHYEGLIFR). Residues 432–452 (FKFLMIITLACAALTIVFFIT) traverse the membrane as a helical segment. The Lumenal segment spans residues 453–471 (TQITEGNWKLGDLSIELNS). The chain crosses the membrane as a helical span at residues 472 to 492 (AFFTGVYGMWNLYVFALMFLY). At 493-541 (APSHKHYGDGQSNDGAGMSSGEELQLTTTITHIDGPTEVYRLAGKEAQE) the chain is on the cytoplasmic side.

Belongs to the wntless family.

The protein localises to the golgi apparatus membrane. The protein resides in the cytoplasmic vesicle membrane. In terms of biological role, required for a subset of Wnt-dependent developmental processes, in particular, eye and pronephros development. Regulates the secretion of wnt4, which is required for eye development. The protein is Protein wntless homolog A (wls-a) of Xenopus laevis (African clawed frog).